The primary structure comprises 122 residues: Large ribosomal subunit protein uL24 (122 aa).

It belongs to the universal ribosomal protein uL24 family. In terms of assembly, part of the 50S ribosomal subunit.

Its function is as follows. One of two assembly initiator proteins, it binds directly to the 5'-end of the 23S rRNA, where it nucleates assembly of the 50S subunit. Functionally, one of the proteins that surrounds the polypeptide exit tunnel on the outside of the subunit. This chain is Large ribosomal subunit protein uL24, found in Renibacterium salmoninarum (strain ATCC 33209 / DSM 20767 / JCM 11484 / NBRC 15589 / NCIMB 2235).